A 198-amino-acid polypeptide reads, in one-letter code: Ribonuclease HII (198 aa).

Residues 10–198 (QLVAGVDEVG…PVKRALGLAS (189 aa)) enclose the RNase H type-2 domain. Residues Asp-16, Glu-17, and Asp-108 each contribute to the a divalent metal cation site.

The protein belongs to the RNase HII family. Requires Mn(2+) as cofactor. Mg(2+) serves as cofactor.

It is found in the cytoplasm. The enzyme catalyses Endonucleolytic cleavage to 5'-phosphomonoester.. Endonuclease that specifically degrades the RNA of RNA-DNA hybrids. The polypeptide is Ribonuclease HII (Escherichia coli O81 (strain ED1a)).